A 454-amino-acid polypeptide reads, in one-letter code: Tubulin beta-2 chain (454 aa).

8 residues coordinate GTP: glutamine 11, glutamate 69, serine 138, glycine 142, threonine 143, glycine 144, asparagine 204, and asparagine 226. Residue glutamate 69 coordinates Mg(2+). The segment at 426–454 (QEASVDDEAMEDDAEAEGGAGQNEAVEEF) is disordered. Acidic residues predominate over residues 429-441 (SVDDEAMEDDAEA).

Belongs to the tubulin family. As to quaternary structure, dimer of alpha and beta chains. A typical microtubule is a hollow water-filled tube with an outer diameter of 25 nm and an inner diameter of 15 nM. Alpha-beta heterodimers associate head-to-tail to form protofilaments running lengthwise along the microtubule wall with the beta-tubulin subunit facing the microtubule plus end conferring a structural polarity. Microtubules usually have 13 protofilaments but different protofilament numbers can be found in some organisms and specialized cells. It depends on Mg(2+) as a cofactor.

The protein resides in the cytoplasm. It localises to the cytoskeleton. It is found in the spindle. Its subcellular location is the nucleus. Functionally, tubulin is the major constituent of microtubules, a cylinder consisting of laterally associated linear protofilaments composed of alpha- and beta-tubulin heterodimers. Microtubules grow by the addition of GTP-tubulin dimers to the microtubule end, where a stabilizing cap forms. Below the cap, tubulin dimers are in GDP-bound state, owing to GTPase activity of alpha-tubulin. In terms of biological role, this is the major beta tubulin of mitotic spindle. The chain is Tubulin beta-2 chain (BETC) from Physarum polycephalum (Slime mold).